The sequence spans 287 residues: Centromere protein P (287 aa).

Positions 1 to 37 form a coiled coil; it reads MDNSVYQVYEDEIQLLEEEIKLLSDKYEDIQQESTFF.

Belongs to the CENP-P/CTF19 family. In terms of assembly, component of the CENPA-HI complex, at least composed of CENPH, CENPI, CENPK, CENPL, CENPM, CENPO and CENPP.

The protein resides in the nucleus. It localises to the chromosome. It is found in the centromere. Functionally, component of the CENPA-HI complex, a centromeric complex involved in assembly of kinetochore proteins, mitotic progression and chromosome segregation. The protein is Centromere protein P (CENPP) of Gallus gallus (Chicken).